Consider the following 219-residue polypeptide: Putative ankyrin repeat protein BB_0399 (219 aa).

ANK repeat units follow at residues 104–133, 137–166, and 170–199; these read YKIS…SLNQ, TGYS…DLSF, and NRKT…YIDD.

The chain is Putative ankyrin repeat protein BB_0399 from Borreliella burgdorferi (strain ATCC 35210 / DSM 4680 / CIP 102532 / B31) (Borrelia burgdorferi).